A 501-amino-acid polypeptide reads, in one-letter code: Ammonium transporter 1 member 1 (501 aa).

The next 10 membrane-spanning stretches (helical) occupy residues 8-28 (LAVL…GQLG), 46-66 (LLFS…LCAG), 81-101 (VLDA…FAFG), 128-148 (FLYQ…SIAE), 152-172 (FVAY…VVSH), 199-219 (FAGS…GALI), 243-263 (LVVL…PGSF), 333-353 (VVEP…LLGC), 366-386 (LEAA…TALF), and 419-439 (LIQI…LFFI). Thr-460 bears the Phosphothreonine mark. Residues Ser-475, Ser-488, Ser-490, and Ser-492 each carry the phosphoserine modification.

Belongs to the ammonia transporter channel (TC 1.A.11.2) family. In terms of assembly, self interacts. Interacts with the receptor protein kinases CEPR2, At2g28990 and PAM74. Highly expressed in roots. Expressed in root tips, root hairs, root epidermis, rhizodermis, cortex and pericycle. Expressed in leaves epidermal and mesophyll cells.

It is found in the cell membrane. Functionally, high affinity ammonium transporter probably involved in ammonium uptake from the soil, long-distance transport to the shoots and re-uptake of apoplastic ammonium that derives from photorespiration in shoots. Contributes with AMT1-3 to the overall ammonium uptake capacity in roots under nitrogen-deficiency conditions. The protein is Ammonium transporter 1 member 1 (AMT1-1) of Arabidopsis thaliana (Mouse-ear cress).